Consider the following 112-residue polypeptide: UPF0235 protein Atu2660 (112 aa).

The protein belongs to the UPF0235 family.

The protein is UPF0235 protein Atu2660 of Agrobacterium fabrum (strain C58 / ATCC 33970) (Agrobacterium tumefaciens (strain C58)).